A 214-amino-acid polypeptide reads, in one-letter code: MYKIGLTGGIGSGKSRVADMLAEWGASVIDADEISHALTAPGGAAMPAIAREFGPQAVAADGALDRAWMRDLVFREPTARGRLEALLHPLIGLHTEQAAAQARGLYLVFVVPLLVESGRWRGRVDRICVVDCDPATQIARVQKRSGLTEPAIRRIMAAQAARATRLEAADDVIVNDGATSPDTLRARARTLHDRWLALAGAASQPGGKAAGTPE.

Positions 3 to 202 constitute a DPCK domain; sequence KIGLTGGIGS…DRWLALAGAA (200 aa). 11-16 is a binding site for ATP; it reads GSGKSR.

This sequence belongs to the CoaE family.

It localises to the cytoplasm. It carries out the reaction 3'-dephospho-CoA + ATP = ADP + CoA + H(+). The protein operates within cofactor biosynthesis; coenzyme A biosynthesis; CoA from (R)-pantothenate: step 5/5. In terms of biological role, catalyzes the phosphorylation of the 3'-hydroxyl group of dephosphocoenzyme A to form coenzyme A. The protein is Dephospho-CoA kinase of Bordetella pertussis (strain Tohama I / ATCC BAA-589 / NCTC 13251).